Reading from the N-terminus, the 155-residue chain is Movement protein TGB3 (155 aa).

The Cytoplasmic portion of the chain corresponds to Met-1–Tyr-59. The helical transmembrane segment at Ala-60–Ile-80 threads the bilayer. Residues Pro-81–Ser-130 lie on the Lumenal side of the membrane. An Involved in plasmodesmata targeting and virus cell-to-cell movement motif is present at residues Tyr-89–Asn-93. The helical transmembrane segment at Val-131–Leu-151 threads the bilayer. The segment at Leu-150–Arg-155 is required for attachment to the host plasmodesmata-associated membrane compartments. Residues Ser-152–Arg-155 are Cytoplasmic-facing.

This sequence belongs to the virgaviridae TGB3 movement protein family. In terms of assembly, interacts with movement proteins TGB1 and TGB2. TGB1-TGB3-TGB2 complex formation is enhanced by ATP hydrolysis.

It is found in the host cell junction. The protein localises to the host plasmodesma. It localises to the host endoplasmic reticulum membrane. Its subcellular location is the host cytoplasm. The protein resides in the host cytoskeleton. Participates in the transport of viral genome to neighboring plant cells directly through plasmodesmata, without any budding. TGBp2 and TGBp3 are necessary for intracellular delivery of TGBp1-containing vRNPs to plasmodesmata. Can gate plasmodesmata and increase their size exclusion limit. Induces host actin cytoskeleton network thickening, which probably plays a major role in virus cell-to-cell movement. This chain is Movement protein TGB3, found in Hordeum vulgare (Barley).